The sequence spans 360 residues: Phospho-N-acetylmuramoyl-pentapeptide-transferase (360 aa).

The next 10 membrane-spanning stretches (helical) occupy residues 26 to 46 (TILGVLTALGIALMIGPAVIQ), 73 to 93 (TMGGALILVAIAVSTLLWADL), 98 to 118 (VWVVLLVTLAFGLIGGVDDAL), 136 to 156 (LQVLAALAASTFLFATATDPV), 168 to 188 (WVFPLGLGFIALATLVIVGSS), 199 to 219 (GLAIMPTVLVATGLAVFAYAS), 235 to 255 (GVGELVIFCGAIVGAGLGFLW), 263 to 283 (VFMGDVGALALGAALGVVAVA), 288 to 308 (IVLFIMGGIFVMETVSVMIQV), and 338 to 358 (VIVRFWIITVVLVLIGLAMLK).

This sequence belongs to the glycosyltransferase 4 family. MraY subfamily. Mg(2+) serves as cofactor.

The protein resides in the cell inner membrane. The catalysed reaction is UDP-N-acetyl-alpha-D-muramoyl-L-alanyl-gamma-D-glutamyl-meso-2,6-diaminopimeloyl-D-alanyl-D-alanine + di-trans,octa-cis-undecaprenyl phosphate = di-trans,octa-cis-undecaprenyl diphospho-N-acetyl-alpha-D-muramoyl-L-alanyl-D-glutamyl-meso-2,6-diaminopimeloyl-D-alanyl-D-alanine + UMP. It participates in cell wall biogenesis; peptidoglycan biosynthesis. Its function is as follows. Catalyzes the initial step of the lipid cycle reactions in the biosynthesis of the cell wall peptidoglycan: transfers peptidoglycan precursor phospho-MurNAc-pentapeptide from UDP-MurNAc-pentapeptide onto the lipid carrier undecaprenyl phosphate, yielding undecaprenyl-pyrophosphoryl-MurNAc-pentapeptide, known as lipid I. This chain is Phospho-N-acetylmuramoyl-pentapeptide-transferase, found in Halorhodospira halophila (strain DSM 244 / SL1) (Ectothiorhodospira halophila (strain DSM 244 / SL1)).